The sequence spans 728 residues: Protein psiK (728 aa).

The first 20 residues, 1 to 20, serve as a signal peptide directing secretion; it reads MKKTFIFLYCVVLFISTTLA. The Extracellular portion of the chain corresponds to 21–666; it reads VEMKKTQDFN…FICKTAAVVS (646 aa). N-linked (GlcNAc...) asparagine glycosylation is found at asparagine 61, asparagine 74, and asparagine 104. The PA14 domain maps to 118–266; it reads MNLDDKSNYF…YDFCGVCTGN (149 aa). N-linked (GlcNAc...) asparagine glycosylation is found at asparagine 272, asparagine 326, asparagine 335, asparagine 438, asparagine 543, and asparagine 638. The helical transmembrane segment at 667-687 threads the bilayer; sequence VGVAVGVAVGGAIALGVFIFA. The Cytoplasmic segment spans residues 688-728; it reads GKKGYDYWKASQGVTMATSNANPLYESNPSGGENPIYTSPN.

It belongs to the prespore-cell-inducing factor family.

Its subcellular location is the membrane. The chain is Protein psiK (psiK) from Dictyostelium discoideum (Social amoeba).